The chain runs to 179 residues: Signal peptidase complex catalytic subunit SEC11A (179 aa).

Over 1-16 (MLSLDFLDDVRRMNKR) the chain is Cytoplasmic. A helical; Signal-anchor for type II membrane protein transmembrane segment spans residues 17-36 (QLYYQVLNFGMIVSSALMIW). Residues 37-179 (KGLMVITGSE…LGLFVLVHRE (143 aa)) are Lumenal-facing. Residues serine 56, histidine 96, and aspartate 122 each act as charge relay system in the active site. Residues 165 to 176 (AVLFLLGLFVLV) form a C-terminal short (CTS) helix region.

It belongs to the peptidase S26B family. In terms of assembly, component of the signal peptidase complex paralog A (SPC-A) composed of a catalytic subunit SEC11A and three accessory subunits SPCS1, SPCS2 and SPCS3. Within the complex, interacts with SPCS2 and SPCS3. The complex induces a local thinning of the ER membrane which is used to measure the length of the signal peptide (SP) h-region of protein substrates. This ensures the selectivity of the complex towards h-regions shorter than 18-20 amino acids.

It is found in the endoplasmic reticulum membrane. The catalysed reaction is Cleavage of hydrophobic, N-terminal signal or leader sequences from secreted and periplasmic proteins.. Functionally, catalytic component of the signal peptidase complex (SPC) which catalyzes the cleavage of N-terminal signal sequences from nascent proteins as they are translocated into the lumen of the endoplasmic reticulum. Specifically cleaves N-terminal signal peptides that contain a hydrophobic alpha-helix (h-region) shorter than 18-20 amino acids. The polypeptide is Signal peptidase complex catalytic subunit SEC11A (SEC11A) (Bos taurus (Bovine)).